The primary structure comprises 248 residues: 1,2-phenylacetyl-CoA epoxidase, subunit C (248 aa).

Substrate is bound by residues 76–79 and 177–179; these read QFSN and IAL.

As to quaternary structure, forms a stable heterotetramer (dimer of heterodimers) with PaaA and a stable heterodimer with PaaB.

It functions in the pathway aromatic compound metabolism; phenylacetate degradation. Functionally, component of 1,2-phenylacetyl-CoA epoxidase multicomponent enzyme system which catalyzes the reduction of phenylacetyl-CoA (PA-CoA) to form 1,2-epoxyphenylacetyl-CoA. The subunit C may be essential for structural integrity of the alpha subunit. The protein is 1,2-phenylacetyl-CoA epoxidase, subunit C (paaC) of Escherichia coli (strain K12).